The following is a 291-amino-acid chain: Bis(5'-nucleosyl)-tetraphosphatase, symmetrical (291 aa).

This sequence belongs to the Ap4A hydrolase family.

The catalysed reaction is P(1),P(4)-bis(5'-adenosyl) tetraphosphate + H2O = 2 ADP + 2 H(+). Hydrolyzes diadenosine 5',5'''-P1,P4-tetraphosphate to yield ADP. The chain is Bis(5'-nucleosyl)-tetraphosphatase, symmetrical from Coxiella burnetii (strain RSA 331 / Henzerling II).